Consider the following 392-residue polypeptide: Galactokinase (392 aa).

Alpha-D-galactose-binding residues include Arg37, Glu43, His44, and Asp46. Residues Gly136, Gly138, Ser140, and Ser141 each contribute to the ATP site. Residue Asp186 coordinates alpha-D-galactose. Asp186 functions as the Proton acceptor in the catalytic mechanism. Phosphoserine is present on Ser230. Residue Tyr236 coordinates alpha-D-galactose.

This sequence belongs to the GHMP kinase family. GalK subfamily. In terms of assembly, homodimer.

The catalysed reaction is alpha-D-galactose + ATP = alpha-D-galactose 1-phosphate + ADP + H(+). It functions in the pathway carbohydrate metabolism; galactose metabolism. Catalyzes the transfer of a phosphate from ATP to alpha-D-galactose and participates in the first committed step in the catabolism of galactose. The protein is Galactokinase of Homo sapiens (Human).